The chain runs to 265 residues: Esterase claE (265 aa).

Catalysis depends on charge relay system residues Ser121, Asp211, and His239.

The protein belongs to the LovG family.

The protein operates within secondary metabolite biosynthesis. Functionally, esterase; part of the cla gene cluster that produces clavatol and ortho-quinone methide. The clavatol biosynthesis cluster cla and the terrestric acid cluster tra are both involved in the production of peniphenones and penilactones. The non-reducing PKS claF is responsible for the formation of clavatol from successive condensations of 3 malonyl-CoA units, presumably with a simple acetyl-CoA starter unit, and 2 methylation steps. The esterase claE probably collaborates with claF by catalyzing the hydrolysis of ACP-bound acyl intermediates to free the ACP from stalled intermediates. The clavatol oxidase claD then converts clavatol to hydroxyclavatol. Spontaneous dehydration of hydroxyclavatol leads to the accumulation of the highly active ortho-quinone methide. On the other hand, the PKS-NRPS hybrid traA is involved in the formation of crustosic acid, with the help of traB and traD. The polyketide synthase module (PKS) of traA is responsible for the synthesis of the polyketide backbone via the condensation of an acetyl-CoA starter unit with 3 malonyl-CoA units. The downstream nonribosomal peptide synthetase (NRPS) module then amidates the carboxyl end of the polyketide with L-malic acid. Because traA lacks a designated enoylreductase (ER) domain, the required activity is provided the enoyl reductase traG. Crustosic acid undergoes decarboxylation and isomerization to the terrestric acid, catalyzed by the 2-oxoglutarate-dependent dioxygenase traH. Both acids are further converted to the 2 gamma-butyrolactones (R)-5-methyltetronic acid and (S)-5-carboxylmethyltetronic acid, with involvement of the cytochrome P450 monooxygenase claJ. Spontaneous addition of the methide to these gamma-butyrolactones leads to peniphenone D and penilactone D, which undergo again stereospecific attacking by methide to give penilactones A and B. The sequence is that of Esterase claE from Penicillium crustosum (Blue mold fungus).